A 119-amino-acid polypeptide reads, in one-letter code: NAD(P)H-quinone oxidoreductase subunit M (119 aa).

Belongs to the complex I NdhM subunit family. In terms of assembly, NDH-1 can be composed of about 15 different subunits; different subcomplexes with different compositions have been identified which probably have different functions.

Its subcellular location is the cellular thylakoid membrane. It carries out the reaction a plastoquinone + NADH + (n+1) H(+)(in) = a plastoquinol + NAD(+) + n H(+)(out). The enzyme catalyses a plastoquinone + NADPH + (n+1) H(+)(in) = a plastoquinol + NADP(+) + n H(+)(out). In terms of biological role, NDH-1 shuttles electrons from an unknown electron donor, via FMN and iron-sulfur (Fe-S) centers, to quinones in the respiratory and/or the photosynthetic chain. The immediate electron acceptor for the enzyme in this species is believed to be plastoquinone. Couples the redox reaction to proton translocation, and thus conserves the redox energy in a proton gradient. Cyanobacterial NDH-1 also plays a role in inorganic carbon-concentration. The protein is NAD(P)H-quinone oxidoreductase subunit M of Picosynechococcus sp. (strain ATCC 27264 / PCC 7002 / PR-6) (Agmenellum quadruplicatum).